The following is a 699-amino-acid chain: tRNA(Met) cytidine acetyltransferase TmcA (699 aa).

Residues Q178, 200–209 (GRGKSTLAGM), and R322 contribute to the ATP site. Residues 408 to 547 (MHIASAQVAG…SGCYSAMAIL (140 aa)) enclose the N-acetyltransferase domain. Acetyl-CoA contacts are provided by residues 475-477 (IAV) and 482-488 (RRQGIGR).

It belongs to the RNA cytidine acetyltransferase family. TmcA subfamily.

It localises to the cytoplasm. The enzyme catalyses cytidine(34) in elongator tRNA(Met) + acetyl-CoA + ATP + H2O = N(4)-acetylcytidine(34) in elongator tRNA(Met) + ADP + phosphate + CoA + H(+). In terms of biological role, catalyzes the formation of N(4)-acetylcytidine (ac(4)C) at the wobble position of tRNA(Met), by using acetyl-CoA as an acetyl donor and ATP (or GTP). The polypeptide is tRNA(Met) cytidine acetyltransferase TmcA (Pectobacterium atrosepticum (strain SCRI 1043 / ATCC BAA-672) (Erwinia carotovora subsp. atroseptica)).